The primary structure comprises 221 residues: 7-cyano-7-deazaguanine synthase (221 aa).

Residue 7–17 participates in ATP binding; it reads LSGGLDSAVSL. 4 residues coordinate Zn(2+): Cys-192, Cys-200, Cys-203, and Cys-206.

This sequence belongs to the QueC family. Homodimer. Zn(2+) is required as a cofactor.

It catalyses the reaction 7-carboxy-7-deazaguanine + NH4(+) + ATP = 7-cyano-7-deazaguanine + ADP + phosphate + H2O + H(+). The protein operates within purine metabolism; 7-cyano-7-deazaguanine biosynthesis. Its function is as follows. Catalyzes the ATP-dependent conversion of 7-carboxy-7-deazaguanine (CDG) to 7-cyano-7-deazaguanine (preQ(0)). This is 7-cyano-7-deazaguanine synthase from Pelotomaculum thermopropionicum (strain DSM 13744 / JCM 10971 / SI).